We begin with the raw amino-acid sequence, 889 residues long: Putative receptor-like protein kinase At3g46340 (889 aa).

An N-terminal signal peptide occupies residues 1 to 25 (MEFPHSVLLVVLIIATFAISNLVQA). The Extracellular segment spans residues 26–514 (EEDQEGFISL…VITKKKFPVM (489 aa)). Residues Asn-185, Asn-239, Asn-259, Asn-292, Asn-316, Asn-342, Asn-366, Asn-419, Asn-435, Asn-448, Asn-467, and Asn-474 are each glycosylated (N-linked (GlcNAc...) asparagine). LRR repeat units follow at residues 414–437 (RITSLNLSSTGLTGNIAAGIQNLT), 438–460 (HLDKLDLSNNNLTGGVPEFLASM), and 462–483 (SLSFINLSKNNLNGSIPQALLK). A helical transmembrane segment spans residues 515 to 535 (IVALVSSAVVVILVVLVLIFV). Residues 536-889 (FKKKKPSNLE…FDTKAVPSAR (354 aa)) are Cytoplasmic-facing. Residues 544 to 566 (LEDLPPSSNTPRENITSTSISDT) are disordered. A Protein kinase domain is found at 585-874 (KNLQRPLGEG…TQGMDSHSSF (290 aa)). ATP is bound by residues 591 to 599 (LGEGGFGVV) and Lys-614. Residue Tyr-659 is modified to Phosphotyrosine. The active-site Proton acceptor is Asp-711. At Ser-745 the chain carries Phosphoserine. Residues Thr-746 and Thr-751 each carry the phosphothreonine modification. Phosphotyrosine is present on Tyr-759. Positions 863–889 (NKTQGMDSHSSFEQSMSFDTKAVPSAR) are disordered. The span at 864-880 (KTQGMDSHSSFEQSMSF) shows a compositional bias: polar residues.

Belongs to the protein kinase superfamily. Ser/Thr protein kinase family.

Its subcellular location is the cell membrane. It catalyses the reaction L-seryl-[protein] + ATP = O-phospho-L-seryl-[protein] + ADP + H(+). The catalysed reaction is L-threonyl-[protein] + ATP = O-phospho-L-threonyl-[protein] + ADP + H(+). In Arabidopsis thaliana (Mouse-ear cress), this protein is Putative receptor-like protein kinase At3g46340.